We begin with the raw amino-acid sequence, 728 residues long: E3 ubiquitin-protein ligase LNX (728 aa).

The RING-type zinc-finger motif lies at 45 to 83; the sequence is CHICLQALLDPLDTPCGHTYCTLCLTNFLVEKDFCPVDR. Residues 185–188 carry the NPXY motif motif; that stretch reads NPAY. The disordered stretch occupies residues 185 to 220; it reads NPAYVSSVEDGEPVANSSDSGRSNRTRARPFERSTM. Positions 186–244 are interaction with MAGEB18; it reads PAYVSSVEDGEPVANSSDSGRSNRTRARPFERSTMRSRSFKKINRALSALRRTKSGSVV. 2 PDZ domains span residues 278 to 362 and 385 to 467; these read SIKI…VLRE and HVIL…VSRQ. Phosphoserine is present on S445. The segment at 481–500 is disordered; it reads WISNGQQSPGPGERNTASKP. PDZ domains are found at residues 508-593 and 638-723; these read VVSV…ALEV and DVIL…IASW.

In terms of assembly, interacts with CXADR. Interacts with MAGEB18 and MAGEF1. Interacts with the phosphotyrosine interaction domain of all isoforms of NUMB. IGSF5/JAM4 interacts with isoform 2 through the second PDZ domain, other isoforms may also interact with IGSF5/JAM4. As to expression, isoform 1 and isoform 2 are expressed in the heart. Isoform 1 is also expressed in kidney, lung and skeletal muscle while isoform 2 is also expressed in brain.

It is found in the cytoplasm. The enzyme catalyses S-ubiquitinyl-[E2 ubiquitin-conjugating enzyme]-L-cysteine + [acceptor protein]-L-lysine = [E2 ubiquitin-conjugating enzyme]-L-cysteine + N(6)-ubiquitinyl-[acceptor protein]-L-lysine.. It participates in protein modification; protein ubiquitination. In terms of biological role, E3 ubiquitin-protein ligase that mediates ubiquitination and subsequent proteasomal degradation of NUMB. E3 ubiquitin ligases accept ubiquitin from an E2 ubiquitin-conjugating enzyme in the form of a thioester and then directly transfers the ubiquitin to targeted substrates. Mediates ubiquitination of isoform p66 and isoform p72 of NUMB, but not that of isoform p71 or isoform p65. Its function is as follows. Isoform 2 provides an endocytic scaffold for IGSF5/JAM4. The protein is E3 ubiquitin-protein ligase LNX (Lnx1) of Mus musculus (Mouse).